The sequence spans 50 residues: Large ribosomal subunit protein bL33 (50 aa).

It belongs to the bacterial ribosomal protein bL33 family.

The protein is Large ribosomal subunit protein bL33 of Endomicrobium trichonymphae.